The primary structure comprises 401 residues: ATP phosphoribosyltransferase regulatory subunit (401 aa).

Residues 373 to 401 (PGQQGGAAAQGCDRRLQQDDGGGWVTRPL) are disordered. Positions 392 to 401 (DGGGWVTRPL) are enriched in gly residues.

The protein belongs to the class-II aminoacyl-tRNA synthetase family. HisZ subfamily. As to quaternary structure, heteromultimer composed of HisG and HisZ subunits.

The protein resides in the cytoplasm. It participates in amino-acid biosynthesis; L-histidine biosynthesis; L-histidine from 5-phospho-alpha-D-ribose 1-diphosphate: step 1/9. Its function is as follows. Required for the first step of histidine biosynthesis. May allow the feedback regulation of ATP phosphoribosyltransferase activity by histidine. The protein is ATP phosphoribosyltransferase regulatory subunit of Alkalilimnicola ehrlichii (strain ATCC BAA-1101 / DSM 17681 / MLHE-1).